Reading from the N-terminus, the 226-residue chain is MKFFRSVGEVFGYSPFRSLAQHARMCGRAVGLLQQQFEALRRGNYEEVEELREEIDELEHHADQIKEEIRGNVTKSLMLPVDRHDLLEFLKVQDDILNNCEHVGHMVTFRKVSAPEDVWDEFLVLLSKLMEIVNNYEEMVERIMQLVETSFSKKEVNRALEYVPIIEQLEHECDLIQIGLHTKLFNLENSNPLDIQLMVTWVVHLGYVANAAARASDRFRIMILGR.

The protein belongs to the UPF0111 family.

The chain is UPF0111 protein AF_1799 from Archaeoglobus fulgidus (strain ATCC 49558 / DSM 4304 / JCM 9628 / NBRC 100126 / VC-16).